Reading from the N-terminus, the 571-residue chain is MRTSQYLFSTLKETPNDAQVISHQLMLRAGMIRPTAAGLYNWLPTGVKILKKVENIIREEMNKGGAIEILMPVVQPAELWQESSRWEQYGPELLRFADRGKRDFVLGPTHEEVITDLVRRELSSYKQLPLNLYQIQTKFRDEVRPRFGVMRSREFVMKDAYSFHTTPESLQQTYEVMYQVYHRIFTRLGLDFRTVQADTGSIGGSASHEFQVLASSGEDDIVFSTESDFAANIELAEAVAMGESKPATEAMVLIDTPNAKTIAELVAQFDLAIEKTVKTLIVKGANETAPLVALILRGDHELNEIKAQKHPLVAEPLAFADEDEIKAKIGVSVGYLGPVNLAIPAIVDRSVALMSDFVAGANIDGKHYLNINWQRDVVLPEVFDLRNVVVGDPSPDGRGILLIKRGIEVGHIFQLGQKYSAAMNATVQGEDGKPLVMTMGCYGIGVTRVVAAAIEQHHDERGIIWPTDEIAPFTVAIVPMNMFKSASVQAFAEQLYTDLMAQGVDVILDDRKERPGVMFADMELIGVPHMIVIGEKNLENGEVEYKNRRTGEKTMIAKDQLLAYLAQNVRA.

The protein belongs to the class-II aminoacyl-tRNA synthetase family. ProS type 1 subfamily. Homodimer.

It localises to the cytoplasm. It carries out the reaction tRNA(Pro) + L-proline + ATP = L-prolyl-tRNA(Pro) + AMP + diphosphate. Functionally, catalyzes the attachment of proline to tRNA(Pro) in a two-step reaction: proline is first activated by ATP to form Pro-AMP and then transferred to the acceptor end of tRNA(Pro). As ProRS can inadvertently accommodate and process non-cognate amino acids such as alanine and cysteine, to avoid such errors it has two additional distinct editing activities against alanine. One activity is designated as 'pretransfer' editing and involves the tRNA(Pro)-independent hydrolysis of activated Ala-AMP. The other activity is designated 'posttransfer' editing and involves deacylation of mischarged Ala-tRNA(Pro). The misacylated Cys-tRNA(Pro) is not edited by ProRS. The protein is Proline--tRNA ligase of Haemophilus ducreyi (strain 35000HP / ATCC 700724).